Consider the following 471-residue polypeptide: Trigger factor (471 aa).

In terms of domain architecture, PPIase FKBP-type spans glycine 165 to proline 244. Residues valine 407–serine 471 form a disordered region. A compositionally biased stretch (acidic residues) spans aspartate 416–proline 443.

It belongs to the FKBP-type PPIase family. Tig subfamily.

Its subcellular location is the cytoplasm. The catalysed reaction is [protein]-peptidylproline (omega=180) = [protein]-peptidylproline (omega=0). Its function is as follows. Involved in protein export. Acts as a chaperone by maintaining the newly synthesized protein in an open conformation. Functions as a peptidyl-prolyl cis-trans isomerase. In Kineococcus radiotolerans (strain ATCC BAA-149 / DSM 14245 / SRS30216), this protein is Trigger factor.